We begin with the raw amino-acid sequence, 483 residues long: Zinc metalloproteinase/disintegrin VMP-II (483 aa).

Positions 1-20 (MIQVLLVTLCLAAFPYQGNS) are cleaved as a signal peptide. A propeptide spanning residues 21-191 (IILESGNVND…KASQLNLTPE (171 aa)) is cleaved from the precursor. In terms of domain architecture, Peptidase M12B spans 198 to 394 (RYIELVVVAD…HNPQCMLNEP (197 aa)). Positions 201 and 285 each coordinate Ca(2+). 3 disulfide bridges follow: Cys309–Cys389, Cys349–Cys373, and Cys351–Cys356. His334 lines the Zn(2+) pocket. The active site involves Glu335. 2 residues coordinate Zn(2+): His338 and His344. Ca(2+) contacts are provided by Cys389 and Asn392. The propeptide occupies 395–414 (LRTDIVSTPVSGNELWETGE). The region spanning 402–483 (TPVSGNELWE…AGCPRNPFHA (82 aa)) is the Disintegrin domain. Intrachain disulfides connect Cys425–Cys448, Cys439–Cys445, Cys444–Cys469, and Cys457–Cys476. Positions 461–463 (KGD) match the Cell attachment site; atypical (KGD) motif.

Belongs to the venom metalloproteinase (M12B) family. P-II subfamily. P-IIe sub-subfamily. In terms of assembly, heterodimer; disulfide-linked (disintegrin). The cofactor is Zn(2+). In terms of tissue distribution, expressed by the venom gland.

It is found in the secreted. Its activity is regulated as follows. Inhibited by EDTA and 1,10-phenanthroline, but not by PMSF. Has fibrinolytic activity. The recombinant enzyme cleaves both alpha- (FGA) and beta-chains (FGB) of fibrinogen, but not the gamma-chain. The recombinant protein does not produce hemorrhage in mice and does not have effect on ADP- or collagen-stimulated platelet aggregation. Functionally, inhibits platelet aggregation induced by ADP, thrombin, platelet-activating factor and collagen. Acts by inhibiting fibrinogen interaction with platelet receptors GPIIb/GPIIIa (ITGA2B/ITGB3). The chain is Zinc metalloproteinase/disintegrin VMP-II from Agkistrodon piscivorus leucostoma (Western cottonmouth).